Reading from the N-terminus, the 72-residue chain is Metallothionein-like protein 1 (72 aa).

Belongs to the metallothionein superfamily. Type 15 family.

Metallothioneins have a high content of cysteine residues that bind various heavy metals. This is Metallothionein-like protein 1 from Erythranthe guttata (Yellow monkey flower).